A 321-amino-acid chain; its full sequence is Olfactory receptor 5K3 (321 aa).

Residues 1-25 (MNKENHSLIAEFILTGFTYHPKLKT) are Extracellular-facing. Residue N5 is glycosylated (N-linked (GlcNAc...) asparagine). A helical transmembrane segment spans residues 26–46 (VLFVVFFAIYLITMVGNIGLV). The Cytoplasmic segment spans residues 47–56 (ALIYIEQRLH). The chain crosses the membrane as a helical span at residues 57 to 77 (TPMYIFLGNLVLMDSCCSSAI). Residues 78–97 (TPKMLENFFSEDKRITLYEC) lie on the Extracellular side of the membrane. C97 and C179 are joined by a disulfide. Residues 98 to 118 (MAQFYFLCLAETTDCFLLAAM) form a helical membrane-spanning segment. Topologically, residues 119-143 (AYDCYVAICNPLQYHTMMSKTLCIQ) are cytoplasmic. Residues 144–164 (MTAGAYLAGNLHPMIEVEFLL) traverse the membrane as a helical segment. Residues 165 to 196 (RLTFCGSHQINHFFCDVLPLYRLSCINPYINE) are Extracellular-facing. Residues 197–217 (LVLFILAGSIQIFTIVLVSYF) form a helical membrane-spanning segment. The Cytoplasmic portion of the chain corresponds to 218–235 (YILFTIFTMKSKEGRGKA). Residues 236 to 256 (LSTCASHFLSVSIFCDSLLFM) traverse the membrane as a helical segment. Residues 257–269 (YARPGAVNEGDKD) lie on the Extracellular side of the membrane. A helical membrane pass occupies residues 270-290 (IPVAIFYTLVIPLLNPFIYSL). The Cytoplasmic segment spans residues 291–321 (RNKEVINIMKKIMKKRKFCHILKQMSSPLAT).

It belongs to the G-protein coupled receptor 1 family.

The protein localises to the cell membrane. Odorant receptor. The chain is Olfactory receptor 5K3 (OR5K3) from Homo sapiens (Human).